The following is a 64-amino-acid chain: Large ribosomal subunit protein bL33c (64 aa).

Belongs to the bacterial ribosomal protein bL33 family.

Its subcellular location is the plastid. The protein localises to the chloroplast. The polypeptide is Large ribosomal subunit protein bL33c (rpl33) (Trieres chinensis (Marine centric diatom)).